The chain runs to 326 residues: Thrombopoietin (326 aa).

An N-terminal signal peptide occupies residues 1 to 21 (MELTDLLLVAILLLTARLTLS). 2 disulfide bridges follow: Cys28/Cys172 and Cys50/Cys106. N-linked (GlcNAc...) asparagine glycosylation is found at Asn197, Asn206, Asn235, Asn249, and Asn256. The tract at residues 307–326 (FPPSPTFPTPGSPPQLPPVS) is disordered. Positions 308–326 (PPSPTFPTPGSPPQLPPVS) are enriched in pro residues.

Belongs to the EPO/TPO family.

The protein localises to the secreted. Functionally, lineage-specific cytokine affecting the proliferation and maturation of megakaryocytes from their committed progenitor cells. It acts at a late stage of megakaryocyte development. It may be the major physiological regulator of circulating platelets. The protein is Thrombopoietin (Thpo) of Rattus norvegicus (Rat).